We begin with the raw amino-acid sequence, 146 residues long: Hemoglobin subunit beta (146 aa).

An N-acetylvaline modification is found at Val-1. Positions 2 to 146 (HLTDAEKAAI…VASALAHKYH (145 aa)) constitute a Globin domain. A heme b-binding site is contributed by His-63. An N6-acetyllysine modification is found at Lys-82. Residue His-92 coordinates heme b. S-nitrosocysteine is present on Cys-93. Lys-144 is subject to N6-acetyllysine.

Belongs to the globin family. Heterotetramer of two alpha chains and two beta chains. As to expression, red blood cells.

In terms of biological role, involved in oxygen transport from the lung to the various peripheral tissues. This is Hemoglobin subunit beta (HBB) from Microtus xanthognathus (Yellow-cheeked vole).